Here is a 243-residue protein sequence, read N- to C-terminus: Protein S40-7 (243 aa).

Disordered stretches follow at residues 1–68 (MNKN…KSGL) and 107–143 (SSTA…ERLP). Positions 10–20 (SSPSSLATISD) are enriched in polar residues. Acidic residues predominate over residues 22–32 (ADGELNEDDIF). Residues 47–67 (PVSSPAKQQTPARQLQRSKSG) are compositionally biased toward polar residues.

Belongs to the senescence regulator S40 family.

The protein resides in the cytoplasm. The sequence is that of Protein S40-7 from Arabidopsis thaliana (Mouse-ear cress).